A 361-amino-acid polypeptide reads, in one-letter code: Putative agmatine deiminase (361 aa).

C354 serves as the catalytic Amidino-cysteine intermediate.

This sequence belongs to the agmatine deiminase family.

The enzyme catalyses agmatine + H2O = N-carbamoylputrescine + NH4(+). The polypeptide is Putative agmatine deiminase (Streptococcus pneumoniae (strain P1031)).